The primary structure comprises 310 residues: MYEIKQPFHSGYLQVSEIHQIYWEESGNPDGVPVIFLHGGPGAGASPECRGFFNPDVFRIVIIDQRGCGRSRPYACAEDNTTWDLVADIEKVREMLGIGKWLVFGGSWGSTLSLAYAQTHPERVKGLVLRGIFLCRPSETVWLNEAGGVSRIYPEQWQKFVAPIAENRRNQLIEAYHGLLFHQDEEVCLSAAKAWADWESYLIRFEPEEVDEDAYASLAIARLENHYFVNGGWLQGDRAILNNIGKIQHIPTIIVQGRYDLCTPMQSAWALSKAFPEAELRVVQAGHRAFDPPLVDALVQAVEDILPHLL.

Residues 33 to 290 enclose the AB hydrolase-1 domain; the sequence is PVIFLHGGPG…RVVQAGHRAF (258 aa). Catalysis depends on Ser-107, which acts as the Nucleophile. Asp-260 is an active-site residue. His-287 serves as the catalytic Proton donor.

Belongs to the peptidase S33 family.

It localises to the cytoplasm. It carries out the reaction Release of N-terminal proline from a peptide.. Specifically catalyzes the removal of N-terminal proline residues from peptides. The protein is Proline iminopeptidase (pip) of Neisseria meningitidis serogroup A / serotype 4A (strain DSM 15465 / Z2491).